Consider the following 473-residue polypeptide: Glycine receptor subunit beta-type 4 (473 aa).

The signal sequence occupies residues 1–19; it reads MHSLFLKILIYSLMQCVLG. Topologically, residues 20–249 are extracellular; it reads QAEFWDYDEN…EFHVDREITH (230 aa). 3 N-linked (GlcNAc...) asparagine glycosylation sites follow: Asn-29, Asn-105, and Asn-151. Cysteines 166 and 180 form a disulfide. The helical transmembrane segment at 250 to 271 threads the bilayer; the sequence is HIIQSYIPTSLIVIISWFSFWL. Residues 272–276 lie on the Cytoplasmic side of the membrane; sequence DVEAV. Residues 277–297 form a helical membrane-spanning segment; that stretch reads PGRVSLSITTLLTLATQSSAA. Residues 298 to 308 lie on the Extracellular side of the membrane; the sequence is RMALPQASDVK. The chain crosses the membrane as a helical span at residues 309-329; the sequence is AIDVWMGTCMAFVFSAMIEFT. At 330-439 the chain is on the cytoplasmic side; it reads VVNYCVRRKV…NRKNAQKIDR (110 aa). A helical membrane pass occupies residues 440 to 460; the sequence is YSRALFPLAFIIFNIFYWIYY. Over 461 to 473 the chain is Extracellular; the sequence is LKYAGSNSPELLL.

This sequence belongs to the ligand-gated ion channel (TC 1.A.9) family. Glycine receptor (TC 1.A.9.3) subfamily. As to quaternary structure, pentamer.

It is found in the postsynaptic cell membrane. Its subcellular location is the synapse. The protein resides in the cell membrane. Glycine receptors are ligand-gated chloride channels. Channel opening is triggered by extracellular glycine. Contributes to the generation of inhibitory postsynaptic currents. The polypeptide is Glycine receptor subunit beta-type 4 (Caenorhabditis elegans).